Here is a 372-residue protein sequence, read N- to C-terminus: Steroid C26-monooxygenase (372 aa).

Cys-314 provides a ligand contact to heme.

Belongs to the cytochrome P450 family. It depends on heme as a cofactor.

The enzyme catalyses cholest-4-en-3-one + 6 reduced [2Fe-2S]-[ferredoxin] + 3 O2 + 5 H(+) = (25R)-3-oxocholest-4-en-26-oate + 6 oxidized [2Fe-2S]-[ferredoxin] + 4 H2O. The protein operates within steroid metabolism; cholesterol degradation. Its function is as follows. Involved in the utilization of cholesterol as the sole carbon and energy source by degrading the side chain during infection. Primarily catalyzes the sequential oxidation of the terminal methyl of cholest-4-en-3-one into (25R)-26-hydroxycholest-4-en-3-one (alcohol), (25R)-26-oxocholest-4-en-3-one (aldehyde), to finally yield the carboxylic acid (25R)-3-oxocholest-4-en-26-oate. Also able to sequentially oxidize cholesterol itself, not only cholest-4-en-3-one. This Mycobacterium tuberculosis (strain CDC 1551 / Oshkosh) protein is Steroid C26-monooxygenase (cyp142).